The primary structure comprises 130 residues: Small ribosomal subunit protein uS9 (130 aa).

This sequence belongs to the universal ribosomal protein uS9 family.

This Haemophilus influenzae (strain ATCC 51907 / DSM 11121 / KW20 / Rd) protein is Small ribosomal subunit protein uS9 (rpsI).